We begin with the raw amino-acid sequence, 2263 residues long: Collagen alpha-6(VI) chain (2263 aa).

The N-terminal stretch at 1-19 is a signal peptide; it reads MMLLILFLVIICSHISVNQ. Residues 20 to 1391 are nonhelical region; the sequence is DSGPEYADVV…TCCCLFCKCI (1372 aa). 5 consecutive VWFA domains span residues 27-206, 229-411, 436-606, 622-791, and 809-982; these read DVVF…IKDV, DVVF…RNQI, DIYL…RNQV, DIMF…EDDL, and DVVF…FSDV. N-linked (GlcNAc...) asparagine glycosylation is found at N198, N275, N288, N347, and N520. 2 N-linked (GlcNAc...) asparagine glycosylation sites follow: N930 and N988. VWFA domains lie at 1000–1171 and 1187–1371; these read DLVF…NKRI and DVVV…GSRL. N1290 carries N-linked (GlcNAc...) asparagine glycosylation. The triple-helical region stretch occupies residues 1392 to 1725; that stretch reads GGDGTMGDPG…GRKGVKGAKG (334 aa). The interval 1397 to 1723 is disordered; the sequence is MGDPGPPGKR…PPGRKGVKGA (327 aa). Residues 1498–1508 show a composition bias toward basic and acidic residues; sequence TPGDRGAKGLR. Residues 1508–1510 carry the Cell attachment site motif; that stretch reads RGD. The segment covering 1547–1559 has biased composition (basic residues); the sequence is SRRKTAAHGRRGH. Over residues 1680-1689 the composition is skewed to gly residues; sequence GDPGGPGETG. The nonhelical region stretch occupies residues 1726–2263; the sequence is LASFSTCELI…MIESAPKQHD (538 aa). 2 consecutive VWFA domains span residues 1757–1937 and 1965–2166; these read ELVF…ERLQ and DAAF…INSI.

It belongs to the type VI collagen family. In terms of assembly, trimers composed of three different chains: alpha-1(VI), alpha-2(VI), and alpha-3(VI) or alpha-5(VI) or alpha-6(VI). Prolines at the third position of the tripeptide repeating unit (G-X-Y) are hydroxylated in some or all of the chains.

It is found in the secreted. The protein resides in the extracellular space. The protein localises to the extracellular matrix. In terms of biological role, collagen VI acts as a cell-binding protein. In Homo sapiens (Human), this protein is Collagen alpha-6(VI) chain (COL6A6).